Here is a 463-residue protein sequence, read N- to C-terminus: Maintenance of mitochondrial morphology protein 1-2 (463 aa).

Over 1–23 (MVIPAELIQKALKQQSGWGFTEG) the chain is Lumenal. Residues 24 to 44 (LVLGQLSVIITVIIILKFVIF) form a helical membrane-spanning segment. Residues 45 to 463 (AENKSPKKGN…TGADTASGSS (419 aa)) are Cytoplasmic-facing. The segment at 72–152 (GGQTANGVKT…VAGSTSNLAV (81 aa)) is disordered. Residues 108 to 122 (RPGSSRVSMVRSTSG) show a composition bias toward polar residues. The region spanning 205–435 (APESLDWFNV…EPHQMIFILP (231 aa)) is the SMP-LTD domain.

The protein belongs to the MMM1 family. As to quaternary structure, homodimer. Component of the ER-mitochondria encounter structure (ERMES) or MDM complex, composed of MMM1, MDM10, MDM12 and MDM34. An MMM1 homodimer associates with one molecule of MDM12 on each side in a pairwise head-to-tail manner, and the SMP-LTD domains of MMM1 and MDM12 generate a continuous hydrophobic tunnel for phospholipid trafficking.

It is found in the endoplasmic reticulum membrane. In terms of biological role, component of the ERMES/MDM complex, which serves as a molecular tether to connect the endoplasmic reticulum (ER) and mitochondria. Components of this complex are involved in the control of mitochondrial shape and protein biogenesis, and function in nonvesicular lipid trafficking between the ER and mitochondria. The MDM12-MMM1 subcomplex functions in the major beta-barrel assembly pathway that is responsible for biogenesis of all outer membrane beta-barrel proteins, and acts in a late step after the SAM complex. The MDM10-MDM12-MMM1 subcomplex further acts in the TOM40-specific pathway after the action of the MDM12-MMM1 complex. Essential for establishing and maintaining the structure of mitochondria and maintenance of mtDNA nucleoids. The protein is Maintenance of mitochondrial morphology protein 1-2 of Yarrowia lipolytica (strain CLIB 122 / E 150) (Yeast).